A 377-amino-acid chain; its full sequence is Alanine racemase (377 aa).

Lysine 37 acts as the Proton acceptor; specific for D-alanine in catalysis. At lysine 37 the chain carries N6-(pyridoxal phosphate)lysine. Arginine 135 serves as a coordination point for substrate. Tyrosine 271 (proton acceptor; specific for L-alanine) is an active-site residue. A substrate-binding site is contributed by methionine 319.

Belongs to the alanine racemase family. The cofactor is pyridoxal 5'-phosphate.

It catalyses the reaction L-alanine = D-alanine. It participates in amino-acid biosynthesis; D-alanine biosynthesis; D-alanine from L-alanine: step 1/1. Its function is as follows. Catalyzes the interconversion of L-alanine and D-alanine. May also act on other amino acids. In Helicobacter pylori (strain P12), this protein is Alanine racemase (alr).